The sequence spans 145 residues: Large ribosomal subunit protein uL15 (145 aa).

Residues 1 to 50 are disordered; sequence MLHTIKPVANARKTTKRLGRGPGSGTGKTSGKGHKGQLARSGKTLRPGFE. Residues 20-30 show a composition bias toward gly residues; that stretch reads RGPGSGTGKTS.

Belongs to the universal ribosomal protein uL15 family. In terms of assembly, part of the 50S ribosomal subunit.

Functionally, binds to the 23S rRNA. In Phytoplasma australiense, this protein is Large ribosomal subunit protein uL15.